A 246-amino-acid chain; its full sequence is MIAALLPSWAVTEHAFTDAPDDPVSLLFPEEAAHVARAVPKRLHEFATVRVCARAALGRLGLPPGPLLPGRRGAPSWPDGVVGSMTHCQGFRGAAVARAADAASLGIDAEPNGPLPDGVLAMVSLPSEREWLAGLAARRPDVHWDRLLFSAKESVFKAWYPLTGLELDFDEAELAVDPDAGTFTARLLVPGPVVGGRRLDGFEGRWAAGEGLVVTAIAVAAPAGTAEESAEGAGKEATADDRTAVP.

Positions 223–232 are enriched in low complexity; that stretch reads AGTAEESAEG. The interval 223–246 is disordered; sequence AGTAEESAEGAGKEATADDRTAVP. A compositionally biased stretch (basic and acidic residues) spans 233–246; the sequence is AGKEATADDRTAVP.

It belongs to the P-Pant transferase superfamily. Gsp/Sfp/HetI/AcpT family.

It catalyses the reaction apo-[ACP] + CoA = holo-[ACP] + adenosine 3',5'-bisphosphate + H(+). Transfers the 4'-phosphopantetheine moiety from coenzyme A to a Ser of an acyl-carrier-protein. The enzyme is able to transfer the cofactor to a broad range of enzymes with acyl- or peptidyl-carrier protein domains. The sequence is that of 4'-phosphopantetheinyl transferase Svp (svp) from Streptomyces mobaraensis (Streptoverticillium mobaraense).